The sequence spans 148 residues: Lysozyme C (148 aa).

Positions 1–18 are cleaved as a signal peptide; the sequence is MKALIILGLVLLSVTVQG. A C-type lysozyme domain is found at 19 to 148; that stretch reads KIFERCELAR…VSQYVEGCGV (130 aa). 4 disulfide bridges follow: Cys24–Cys146, Cys48–Cys134, Cys83–Cys99, and Cys95–Cys113. Catalysis depends on residues Glu53 and Asp71.

Belongs to the glycosyl hydrolase 22 family. As to quaternary structure, monomer.

The enzyme catalyses Hydrolysis of (1-&gt;4)-beta-linkages between N-acetylmuramic acid and N-acetyl-D-glucosamine residues in a peptidoglycan and between N-acetyl-D-glucosamine residues in chitodextrins.. Lysozymes have primarily a bacteriolytic function; those in tissues and body fluids are associated with the monocyte-macrophage system and enhance the activity of immunoagents. This chain is Lysozyme C (LYZ), found in Colobus angolensis (Angolan colobus).